The primary structure comprises 188 residues: Pyridoxal 5'-phosphate synthase subunit PdxT (188 aa).

47 to 49 (GES) contributes to the L-glutamine binding site. C79 functions as the Nucleophile in the catalytic mechanism. L-glutamine-binding positions include R105 and 134 to 135 (IR). Residues H170 and E172 each act as charge relay system in the active site.

This sequence belongs to the glutaminase PdxT/SNO family. In the presence of PdxS, forms a dodecamer of heterodimers. Only shows activity in the heterodimer.

It carries out the reaction aldehydo-D-ribose 5-phosphate + D-glyceraldehyde 3-phosphate + L-glutamine = pyridoxal 5'-phosphate + L-glutamate + phosphate + 3 H2O + H(+). The enzyme catalyses L-glutamine + H2O = L-glutamate + NH4(+). Its pathway is cofactor biosynthesis; pyridoxal 5'-phosphate biosynthesis. In terms of biological role, catalyzes the hydrolysis of glutamine to glutamate and ammonia as part of the biosynthesis of pyridoxal 5'-phosphate. The resulting ammonia molecule is channeled to the active site of PdxS. The chain is Pyridoxal 5'-phosphate synthase subunit PdxT from Listeria monocytogenes serotype 4b (strain F2365).